A 579-amino-acid polypeptide reads, in one-letter code: XK-related protein 7 (579 aa).

Residues 1–18 are compositionally biased toward low complexity; sequence MAAKSDGAAASASPDPEG. Positions 1 to 40 are disordered; sequence MAAKSDGAAASASPDPEGAAGGARGSAGGRGEAAAAAGPP. A compositionally biased stretch (gly residues) spans 19–31; sequence AAGGARGSAGGRG. 2 consecutive transmembrane segments (helical) span residues 59–79 and 89–109; these read WVLC…WLAA and YFSL…LLSF. Positions 146 to 165 are disordered; the sequence is GAFRTKEGSPEPGPQPAPSS. A run of 5 helical transmembrane segments spans residues 260 to 280, 314 to 334, 355 to 375, 384 to 404, and 415 to 435; these read LLPA…LASY, GLAF…FIVA, WEEI…WFNV, MTLY…FWYS, and LIMV…MCVY. The tract at residues 466-510 is disordered; sequence ADAITSPPRSLPRTTGAERDGASAGERAGTPTPPVFQVRPGLPPT.

The protein belongs to the XK family.

The protein localises to the cell membrane. The polypeptide is XK-related protein 7 (Homo sapiens (Human)).